We begin with the raw amino-acid sequence, 449 residues long: Glutamyl-tRNA reductase (449 aa).

Substrate-binding positions include 58-61 (TCNR), serine 121, 126-128 (ETQ), and glutamine 132. The active-site Nucleophile is the cysteine 59. 203–208 (GLGEMA) contacts NADP(+).

The protein belongs to the glutamyl-tRNA reductase family. Homodimer.

The enzyme catalyses (S)-4-amino-5-oxopentanoate + tRNA(Glu) + NADP(+) = L-glutamyl-tRNA(Glu) + NADPH + H(+). Its pathway is porphyrin-containing compound metabolism; protoporphyrin-IX biosynthesis; 5-aminolevulinate from L-glutamyl-tRNA(Glu): step 1/2. Functionally, catalyzes the NADPH-dependent reduction of glutamyl-tRNA(Glu) to glutamate 1-semialdehyde (GSA). The chain is Glutamyl-tRNA reductase from Helicobacter pylori (strain ATCC 700392 / 26695) (Campylobacter pylori).